Here is a 413-residue protein sequence, read N- to C-terminus: GDP-mannose-dependent alpha-mannosyltransferase (413 aa).

The protein belongs to the glycosyltransferase group 1 family.

The protein operates within phospholipid metabolism; phosphatidylinositol metabolism. Its function is as follows. Catalyzes the addition of a mannose residue from GDP-D-mannose to GlcAGroAc2 to generate 1,2-di-O-C16/C18:1-(alpha-D-mannopyranosyl)-(1-4)-(alpha-D-glucopyranosyluronic acid)-(1-3)-glycerol(ManGlcAGroAc2). In Corynebacterium glutamicum (strain ATCC 13032 / DSM 20300 / JCM 1318 / BCRC 11384 / CCUG 27702 / LMG 3730 / NBRC 12168 / NCIMB 10025 / NRRL B-2784 / 534), this protein is GDP-mannose-dependent alpha-mannosyltransferase (mgtA).